The following is a 232-amino-acid chain: Vesicle transport through interaction with t-SNAREs homolog 1B (232 aa).

N-acetylalanine is present on Ala2. Interaction with CLINT1 regions lie at residues 2 to 23 (AASA…GLLE) and 69 to 73 (APLTF). Topologically, residues 2–208 (AASAASSEHF…SRKVITNKLL (207 aa)) are cytoplasmic. Positions 36 to 98 (AGTEEKKKLV…AKLHREVRST (63 aa)) form a coiled coil. Arg107 is subject to Omega-N-methylarginine. The residue at position 138 (Ser138) is a Phosphoserine. Residues 160–201 (GTEIIEELGEQRDQLERTKSRLVNTNENLSKSRKILRSMSRK) are a coiled coil. A helical; Anchor for type IV membrane protein membrane pass occupies residues 209–229 (LSVIILLELAILVGLVYYKFF). The Vesicular segment spans residues 230 to 232 (RHH).

It belongs to the VTI1 family. In terms of assembly, forms a SNARE complex with STX7, STX8 and VAMP8 which functions in the homotypic fusion of late endosomes. Component of the SNARE complex composed of STX7, STX8, VAMP7 and VIT1B that is required for heterotypic fusion of late endosomes with lysosomes. May interact with STX17. Interacts with CLINT1. Broadly expressed.

It localises to the early endosome membrane. It is found in the late endosome membrane. The protein resides in the lysosome membrane. The protein localises to the cytoplasmic granule. Its subcellular location is the recycling endosome membrane. Functionally, V-SNARE that mediates vesicle transport pathways through interactions with t-SNAREs on the target membrane. These interactions are proposed to mediate aspects of the specificity of vesicle trafficking and to promote fusion of the lipid bilayers. In Mus musculus (Mouse), this protein is Vesicle transport through interaction with t-SNAREs homolog 1B (Vti1b).